The following is a 343-amino-acid chain: Multidrug resistance protein MdtN (343 aa).

Over 1–12 (MESTPKKAPRSK) the chain is Cytoplasmic. Residues 13 to 33 (FPALLVVALALVALVFVIWRV) form a helical; Signal-anchor for type II membrane protein membrane-spanning segment. Over 34 to 343 (DSAPSTNDAY…ASAVANLEPQ (310 aa)) the chain is Periplasmic.

The protein belongs to the membrane fusion protein (MFP) (TC 8.A.1) family. In terms of assembly, could be part of a tripartite efflux system composed of MdtN, MdtO and MdtP.

The protein localises to the cell inner membrane. Its function is as follows. Could be involved in resistance to puromycin, acriflavine and tetraphenylarsonium chloride. This chain is Multidrug resistance protein MdtN (mdtN), found in Escherichia coli O6:H1 (strain CFT073 / ATCC 700928 / UPEC).